We begin with the raw amino-acid sequence, 261 residues long: Pyrroline-5-carboxylate reductase (261 aa).

Belongs to the pyrroline-5-carboxylate reductase family.

It localises to the cytoplasm. It carries out the reaction L-proline + NADP(+) = (S)-1-pyrroline-5-carboxylate + NADPH + 2 H(+). The enzyme catalyses L-proline + NAD(+) = (S)-1-pyrroline-5-carboxylate + NADH + 2 H(+). It participates in amino-acid biosynthesis; L-proline biosynthesis; L-proline from L-glutamate 5-semialdehyde: step 1/1. Catalyzes the reduction of 1-pyrroline-5-carboxylate (PCA) to L-proline. In Thermus thermophilus (strain ATCC BAA-163 / DSM 7039 / HB27), this protein is Pyrroline-5-carboxylate reductase.